The sequence spans 694 residues: Pentatricopeptide repeat-containing protein At3g12770 (694 aa).

PPR repeat units follow at residues 52–82, 83–117, 118–152, 153–183, 186–220, 221–255, 256–286, 287–321, 322–356, 357–387, 388–422, 423–457, and 458–488; these read SGFLITKLIHASSSFGDITFARQVFDDLPRP, QIFPWNAIIRGYSRNNHFQDALLMYSNMQLARVSP, DSFTFPHLLKACSGLSHLQMGRFVHAQVFRLGFDA, DVFVQNGLIALYAKCRRLGSARTVFEGLPLP, TIVSWTAIVSAYAQNGEPMEALEIFSQMRKMDVKP, DWVALVSVLNAFTCLQDLKQGRSIHASVVKMGLEI, EPDLLISLNTMYAKCGQVATAKILFDKMKSP, NLILWNAMISGYAKNGYAREAIDMFHEMINKDVRP, DTISITSAISACAQVGSLEQARSMYEYVGRSDYRD, DVFISSALIDMFAKCGSVEGARLVFDRTLDR, DVVVWSAMIVGYGLHGRAREAISLYRAMERGGVHP, NDVTFLGLLMACNHSGMVREGWWFFNRMADHKINP, and QQQHYACVIDLLGRAGHLDQAYEVIKCMPVQ. A type E motif region spans residues 493–568; it reads VWGALLSACK…DVGCSWVEVR (76 aa). The type E(+) motif stretch occupies residues 569 to 599; the sequence is GRLEAFRVGDKSHPRYEEIERQVEWIESRLK. The interval 600 to 694 is type DYW motif; that stretch reads EGGFVANKDA…DGVCSCGDYW (95 aa).

Belongs to the PPR family. PCMP-H subfamily.

This chain is Pentatricopeptide repeat-containing protein At3g12770 (PCMP-H43), found in Arabidopsis thaliana (Mouse-ear cress).